Consider the following 437-residue polypeptide: Adenosylhomocysteinase (437 aa).

The substrate site is built by Thr58, Asp133, and Glu158. 159–161 (TTT) is an NAD(+) binding site. Substrate contacts are provided by Lys188 and Asp192. NAD(+) contacts are provided by residues Asn193, 224-229 (GDVGKG), Glu245, 301-303 (VGH), and Asn348.

It belongs to the adenosylhomocysteinase family. In terms of assembly, homotetramer. The cofactor is NAD(+).

The enzyme catalyses S-adenosyl-L-homocysteine + H2O = L-homocysteine + adenosine. Its pathway is amino-acid biosynthesis; L-homocysteine biosynthesis; L-homocysteine from S-adenosyl-L-homocysteine: step 1/1. Adenosylhomocysteine is a competitive inhibitor of S-adenosyl-L-methionine-dependent methyl transferase reactions; therefore adenosylhomocysteinase may play a key role in the control of methylations via regulation of the intracellular concentration of adenosylhomocysteine. The protein is Adenosylhomocysteinase (ahcy-1) of Caenorhabditis elegans.